The primary structure comprises 214 residues: Orotate phosphoribosyltransferase (214 aa).

Lysine 26 contacts 5-phospho-alpha-D-ribose 1-diphosphate. Residue 34-35 coordinates orotate; it reads FF. 5-phospho-alpha-D-ribose 1-diphosphate contacts are provided by residues 72-73, arginine 99, lysine 100, lysine 103, histidine 105, and 124-132; these read YK and DDVITAGTA. Orotate-binding residues include threonine 128 and arginine 156.

Belongs to the purine/pyrimidine phosphoribosyltransferase family. PyrE subfamily. As to quaternary structure, homodimer. It depends on Mg(2+) as a cofactor.

It carries out the reaction orotidine 5'-phosphate + diphosphate = orotate + 5-phospho-alpha-D-ribose 1-diphosphate. The protein operates within pyrimidine metabolism; UMP biosynthesis via de novo pathway; UMP from orotate: step 1/2. Functionally, catalyzes the transfer of a ribosyl phosphate group from 5-phosphoribose 1-diphosphate to orotate, leading to the formation of orotidine monophosphate (OMP). In Pasteurella multocida (strain Pm70), this protein is Orotate phosphoribosyltransferase.